Here is a 347-residue protein sequence, read N- to C-terminus: Guanine nucleotide-binding protein alpha-6 subunit (347 aa).

A G-alpha domain is found at 30 to 347 (GITQVLLLGA…IIVGHVMDLV (318 aa)). The G1 motif stretch occupies residues 33–46 (QVLLLGAGESGKST). GTP contacts are provided by residues 38–45 (GAGESGKS), 172–178 (LRARVTT), 197–201 (DVGGQ), 266–269 (NKKD), and Ala322. The Mg(2+) site is built by Ser45 and Thr178. Residues 170–178 (DALRARVTT) are G2 motif. The tract at residues 193–202 (MKIIDVGGQR) is G3 motif. Residues 262–269 (ILFLNKKD) form a G4 motif region. Residues 320–325 (TIAVDT) are G5 motif.

This sequence belongs to the G-alpha family. G proteins are composed of 3 units; alpha, beta and gamma. The alpha chain contains the guanine nucleotide binding site.

In terms of biological role, guanine nucleotide-binding proteins (G proteins) are involved as modulators or transducers in various transmembrane signaling systems. G alpha-6 is involved in the folic acid chemotaxis signal transduction pathway. This Dictyostelium discoideum (Social amoeba) protein is Guanine nucleotide-binding protein alpha-6 subunit (gpaF).